The chain runs to 213 residues: Major fimbrial subunit (213 aa).

A signal peptide spans 1–20 (MKKTLLGSLILLAFAGNVQA). A disulfide bridge connects residues C41 and C81.

The protein belongs to the fimbrial protein family.

It localises to the fimbrium. In terms of biological role, mediates adherence to oropharyngeal epithelial cells. Helps the airway colonization process. This is Major fimbrial subunit (hifA) from Haemophilus influenzae.